The sequence spans 316 residues: Epoxide hydrolase 3 (316 aa).

The region spanning 25-302 (PVVLLLHGFP…ACHFINQERP (278 aa)) is the AB hydrolase-1 domain. Asp101 (nucleophile) is an active-site residue. Tyr150 contributes to the an epoxide binding site. The active-site Proton donor is the Tyr230. His295 functions as the Proton acceptor in the catalytic mechanism.

Belongs to the AB hydrolase superfamily. Epoxide hydrolase family. As to quaternary structure, homodimer. In terms of tissue distribution, highly expressed in young fruits 15 days after anthesis (15-DAA).

The enzyme catalyses an epoxide + H2O = an ethanediol. The catalysed reaction is (24S)-24,25-epoxycucurbitadienol + H2O = (24R)-24,25-dihydroxycucurbitadienol. It functions in the pathway secondary metabolite biosynthesis; terpenoid biosynthesis. Functionally, epoxide hydrolase involved in the biosynthesis of cucurbitacin and mogroside tetracyclic triterpene natural products (e.g. siamenoside I and mogrosides IV, V and VI). Cucurbitacins have cytotoxic properties and exhibit deterrent taste as a defense barrier against herbivores. Mogrosides are nonsugar highly oxygenated compounds used as high-intensity zero-calorie sweeteners; they also possess pharmacological properties such as regulating immunity, lowering blood sugar and lipid levels, protecting the liver, and acting as antioxidants and antitumor agents. Catalyzes the hydrolysis of aromatic epoxide-containing substrates, such as the conversion of 24,25-epoxycucurbitadienol to 24,25-dihydroxycucurbitadienol. The polypeptide is Epoxide hydrolase 3 (Siraitia grosvenorii (Monk's fruit)).